The following is a 783-amino-acid chain: Flavin carrier protein 2 (783 aa).

The N-terminal stretch at 1–22 (MIFLNTFARCLLTCFVLCSGTA) is a signal peptide. The Lumenal portion of the chain corresponds to 23–182 (RSSDTNDTTP…NGKTVQTKYA (160 aa)). N-linked (GlcNAc...) asparagine glycans are attached at residues Asn-28, Asn-65, Asn-81, and Asn-156. Residues 183-203 (AWPIAAISGVGVLTSGFVSVI) traverse the membrane as a helical segment. At 204–211 (GYSATAAH) the chain is on the cytoplasmic side. A helical membrane pass occupies residues 212-232 (IASNSISLFIYFQNLAITAMM). Residues 233–347 (GVSRVPPIAA…AYLANIELSN (115 aa)) are Lumenal-facing. An N-linked (GlcNAc...) asparagine glycan is attached at Asn-323. A helical transmembrane segment spans residues 348-368 (FFLTGIVFFLFFLFVVVVSLI). At 369–402 (FFKALLEVLTRARILKETSNFFQYRKNWGSIIKG) the chain is on the cytoplasmic side. The helical transmembrane segment at 403–423 (TLFRLSIIAFPQVSLLAIWEF) threads the bilayer. The Lumenal portion of the chain corresponds to 424 to 430 (TQVNSPA). A helical transmembrane segment spans residues 431–451 (IVVDAVVILLIITGLLVYGTI). At 452–492 (RVFIKGRESLRLYKNPAYLLYSDTYFLNKFGFLYVQFKADK) the chain is on the cytoplasmic side. Residues 493 to 513 (FWWLLPLLSYAFLRSLFVAVL) traverse the membrane as a helical segment. Over 514 to 521 (QNQGKAQA) the chain is Lumenal. The helical transmembrane segment at 522-542 (MIIFVIELAYFVCLCWIRPYL) threads the bilayer. Residues 543–547 (DKRTN) lie on the Cytoplasmic side of the membrane. Residues 548–568 (VFNIAIHLVNLINAFFFLFFS) form a helical membrane-spanning segment. At 569 to 581 (NLFKQPAVVSSVM) the chain is on the lumenal side. A helical membrane pass occupies residues 582 to 602 (AVILFVLNAVFALFLLLFTIV). Over 603-783 (TCTLALLHRN…ENARNNNPYL (181 aa)) the chain is Cytoplasmic. The interval 681–783 (RLFDDETSSS…ENARNNNPYL (103 aa)) is disordered. Residues 688–697 (SSSSFKQNSS) are compositionally biased toward low complexity. Composition is skewed to polar residues over residues 704–748 (VTEQ…TSSL) and 756–767 (YLGNSNKSYSHF). Residues 768–783 (NNNGSNENARNNNPYL) are compositionally biased toward low complexity.

The protein belongs to the transient receptor potential (TRP) ion channel family.

The protein localises to the endoplasmic reticulum membrane. May be responsible for the transport of FAD into the endoplasmic reticulum lumen, where it is required for oxidative protein folding. In Saccharomyces cerevisiae (strain ATCC 204508 / S288c) (Baker's yeast), this protein is Flavin carrier protein 2 (FLC2).